The primary structure comprises 262 residues: 4-hydroxy-2-oxo-heptane-1,7-dioate aldolase (262 aa).

The Proton acceptor role is filled by His45. Gln147 contacts substrate. An a divalent metal cation-binding site is contributed by Glu149. Substrate is bound by residues Ala174 and Asp175. Asp175 is a binding site for a divalent metal cation.

The protein belongs to the HpcH/HpaI aldolase family. In terms of assembly, homohexamer; trimer of dimers. Requires a divalent metal cation as cofactor.

It carries out the reaction 4-hydroxy-2-oxoheptanedioate = succinate semialdehyde + pyruvate. It participates in aromatic compound metabolism; 4-hydroxyphenylacetate degradation; pyruvate and succinate semialdehyde from 4-hydroxyphenylacetate: step 7/7. Catalyzes the reversible retro-aldol cleavage of 4-hydroxy-2-ketoheptane-1,7-dioate (HKHD) to pyruvate and succinic semialdehyde. This is 4-hydroxy-2-oxo-heptane-1,7-dioate aldolase from Shigella boydii serotype 18 (strain CDC 3083-94 / BS512).